We begin with the raw amino-acid sequence, 881 residues long: MKLLSSIEQACDICRLKKLKCSKEKPKCAKCLKNNWECRYSPKTKRSPLTRAHLTEVESRLERLEQLFLLIFPREDLDMILKMDSLQDIKALLTGLFVQDNVNKDAVTDRLASVETDMPLTLRQHRISATSSSEESSNKGQRQLTVSIDSAAHHDNSTIPLDFMPRDALHGFDWSEEDDMSDGLPFLKTDPNNNGFFGDGSLLCILRSIGFKPENYTNSNVNRLPTMITDRYTLASRSTTSRLLQSYLNNFHPYCPIVHSPTLMMLYNNQIEIASKDQWQILFNCILAIGAWCIEGESTDIDVFYYQNAKSHLTSKVFESGSIILVTALHLLSRYTQWRQKTNTSYNFHSFSIRMAISLGLNRDLPSSFSDSSILEQRRRIWWSVYSWEIQLSLLYGRSIQLSQNTISFPSSVDDVQRTTTGPTIYHGIIETARLLQVFTKIYELDKTVTAEKSPICAKKCLMICNEIEEVSRQAPKFLQMDISTTALTNLLKEHPWLSFTRFELKWKQLSLIIYVLRDFFTNFTQKKSQLEQDQNDHQSYEVKRCSIMLSDAAQRTVMSVSSYMDNHNVTPYFAWNCSYYLFNAVLVPIKTLLSNSKSNAENNETAQLLQQINTVLMLLKKLATFKIQTCEKYIQVLEEVCAPFLLSQCAIPLPHISYNNSNGSAIKNIVGSATIAQYPTLPEENVNNISVKYVSPGSVGPSPVPLKSGASFSDLVKLLSNRPPSRNSPVTIPRSTPSHRSVTPFLGQQQQLQSLVPLTPSALFGGANFNQSGNIADSSLSFTFTNSSNGPNLITTQTNSQALSQPIASSNVHDNFMNNEITASKIDDGNNSKPLSPGWTDQTAYNAFGITTGMFNTTTMDDVYNYLFDDEDTPPNPKKE.

Residues Cys-11, Cys-14, Cys-21, Cys-28, Cys-31, and Cys-38 each coordinate Zn(2+). Residues 11–38 (CDICRLKKLKCSKEKPKCAKCLKNNWEC) constitute a DNA-binding region (zn(2)-C6 fungal-type). Phosphotyrosine is present on Tyr-694. Residues Ser-696, Ser-699, Ser-703, and Ser-712 each carry the phosphoserine modification. The segment at 723–743 (RPPSRNSPVTIPRSTPSHRSV) is disordered. The 9aaTAD motif lies at 862 to 870 (DDVYNYLFD).

As to quaternary structure, binds DNA as a homodimer. Interacts directly with the mediator subunits GAL11/MED15 and SRB4/MED17. Association between GAL11 and GAL4 may serve to expedite phosphorylation of GAL4.

It localises to the nucleus. In terms of biological role, this protein is a positive regulator for the gene expression of the galactose-induced genes such as GAL1, GAL2, GAL7, GAL10, and MEL1 which code for the enzymes used to convert galactose to glucose. It recognizes a 17 base pair sequence in (5'-CGGRNNRCYNYNCNCCG-3') the upstream activating sequence (UAS-G) of these genes. In Saccharomyces cerevisiae (strain ATCC 204508 / S288c) (Baker's yeast), this protein is Regulatory protein GAL4 (GAL4).